The following is a 181-amino-acid chain: Probable integrase/recombinase YoeC (181 aa).

The Tyr recombinase domain maps to 3 to 176; sequence IVQPIRSLEK…DEDTTRAAYK (174 aa). Residues arginine 40, lysine 64, histidine 128, arginine 131, and histidine 154 contribute to the active site. Tyrosine 163 (O-(3'-phospho-DNA)-tyrosine intermediate) is an active-site residue.

The protein belongs to the 'phage' integrase family.

The polypeptide is Probable integrase/recombinase YoeC (yoeC) (Bacillus subtilis (strain 168)).